A 395-amino-acid polypeptide reads, in one-letter code: Elongation factor Tu (395 aa).

Positions K10–E204 constitute a tr-type G domain. Residues G19–T26 are G1. G19 to T26 is a GTP binding site. T26 provides a ligand contact to Mg(2+). Residues G60–S64 form a G2 region. The segment at D81–G84 is G3. GTP contacts are provided by residues D81–H85 and N136–D139. Residues N136 to D139 are G4. The interval S174–L176 is G5.

Belongs to the TRAFAC class translation factor GTPase superfamily. Classic translation factor GTPase family. EF-Tu/EF-1A subfamily. Monomer.

Its subcellular location is the cytoplasm. The enzyme catalyses GTP + H2O = GDP + phosphate + H(+). Its function is as follows. GTP hydrolase that promotes the GTP-dependent binding of aminoacyl-tRNA to the A-site of ribosomes during protein biosynthesis. In Bacillus cereus (strain ATCC 10987 / NRS 248), this protein is Elongation factor Tu.